A 102-amino-acid polypeptide reads, in one-letter code: A-type ATP synthase subunit F (102 aa).

Belongs to the V-ATPase F subunit family. As to quaternary structure, has multiple subunits with at least A(3), B(3), C, D, E, F, H, I and proteolipid K(x).

The protein localises to the cell membrane. In terms of biological role, component of the A-type ATP synthase that produces ATP from ADP in the presence of a proton gradient across the membrane. In Thermococcus onnurineus (strain NA1), this protein is A-type ATP synthase subunit F.